A 170-amino-acid chain; its full sequence is Glycine cleavage system H protein, mitochondrial (170 aa).

Residues 1-47 (MLRTTRLWTTRMPTVSKLFLRNSSGNALNKNKLPFLYSSQGPQAVRY) constitute a mitochondrion transit peptide. The Lipoyl-binding domain occupies 61–143 (TAFVGITKYA…MGDGWLVKMK (83 aa)). Residue lysine 102 is modified to N6-lipoyllysine.

It belongs to the GcvH family. Component of the glycine decarboxylase complex (GDC), which is composed of four proteins: P, T, L and H. It depends on (R)-lipoate as a cofactor.

The protein resides in the mitochondrion. In terms of biological role, the glycine cleavage system (glycine decarboxylase complex) catalyzes the degradation of glycine. The H protein shuttles the methylamine group of glycine from the P protein to the T protein. The polypeptide is Glycine cleavage system H protein, mitochondrial (GCV3) (Saccharomyces cerevisiae (strain ATCC 204508 / S288c) (Baker's yeast)).